The chain runs to 405 residues: MEEIKLNTIEEALEDFKEGKFLIVVDDEDRENEGDFIIAAEKITPDKVNFMMHHGRGVLCAPISEERAHELELEMQVPDNTSVHETPFTVTVDRLGNGCTTGVSMYDRAQTILALADPNTRPSDLGRPGHICPLRARSRGVLRRAGHTEAAVDLARLCGMQPAAALIEIINEDGTMARLPQLWEVSKRFGLKIIAIKDLIAYRLKQESIVEKGVEVDMPTEYGHFRLIPFRQKSNGLEHIALFKGTWDENEPILVRMHSSCATGDIFGSMRCDCGGQLLQAMEKIEKEGKGAIIYLNQEGRGIGLMEKMKAYKLQEQGMDTIDANLCLGHKADERDYGIGAQILRLLGIKKMRLMTNNPVKRIGLEAFGLEIVENIPLETAPNRYNEFYLRTKKERMGHELHNIK.

The interval 1–205 (MEEIKLNTIE…IKDLIAYRLK (205 aa)) is DHBP synthase. D-ribulose 5-phosphate-binding positions include 30 to 31 (RE), aspartate 35, 144 to 148 (RAGHT), and glutamate 168. Glutamate 31 contacts Mg(2+). Histidine 147 serves as a coordination point for Mg(2+). Positions 206 to 405 (QESIVEKGVE…RMGHELHNIK (200 aa)) are GTP cyclohydrolase II. Residue 256 to 260 (RMHSS) coordinates GTP. Zn(2+)-binding residues include cysteine 261, cysteine 272, and cysteine 274. Residues glutamine 277, 299 to 301 (EGR), and threonine 321 contribute to the GTP site. The Proton acceptor; for GTP cyclohydrolase activity role is filled by aspartate 333. Arginine 335 functions as the Nucleophile; for GTP cyclohydrolase activity in the catalytic mechanism. 2 residues coordinate GTP: threonine 356 and lysine 361.

In the N-terminal section; belongs to the DHBP synthase family. This sequence in the C-terminal section; belongs to the GTP cyclohydrolase II family. Mg(2+) serves as cofactor. Requires Mn(2+) as cofactor. It depends on Zn(2+) as a cofactor.

It catalyses the reaction D-ribulose 5-phosphate = (2S)-2-hydroxy-3-oxobutyl phosphate + formate + H(+). It carries out the reaction GTP + 4 H2O = 2,5-diamino-6-hydroxy-4-(5-phosphoribosylamino)-pyrimidine + formate + 2 phosphate + 3 H(+). It participates in cofactor biosynthesis; riboflavin biosynthesis; 2-hydroxy-3-oxobutyl phosphate from D-ribulose 5-phosphate: step 1/1. It functions in the pathway cofactor biosynthesis; riboflavin biosynthesis; 5-amino-6-(D-ribitylamino)uracil from GTP: step 1/4. Functionally, catalyzes the conversion of D-ribulose 5-phosphate to formate and 3,4-dihydroxy-2-butanone 4-phosphate. In terms of biological role, catalyzes the conversion of GTP to 2,5-diamino-6-ribosylamino-4(3H)-pyrimidinone 5'-phosphate (DARP), formate and pyrophosphate. This chain is Riboflavin biosynthesis protein RibBA, found in Porphyromonas gingivalis (strain ATCC 33277 / DSM 20709 / CIP 103683 / JCM 12257 / NCTC 11834 / 2561).